The chain runs to 548 residues: uncharacterized protein (548 aa).

The DhaL domain maps to 8–200; it reads KLFADMIIQG…LLCVYEGFLK (193 aa).

This is an uncharacterized protein from Staphylococcus aureus (strain NCTC 8325 / PS 47).